The following is a 161-amino-acid chain: Interleukin-17F (161 aa).

The signal sequence occupies residues 1-28 (MKGSCETTMVKSLLLLMLGFAIISSGAA). N83 carries N-linked (GlcNAc...) asparagine glycosylation. 2 disulfide bridges follow: C100/C150 and C105/C152.

It belongs to the IL-17 family. As to quaternary structure, homodimer; disulfide-linked. Heterodimer with IL17A (IL17A-IL17F). Forms complexes with IL17RA and IL17RC receptors with 2:1 binding stoichiometry: two receptor chains for one interleukin molecule. IL17F homodimer forms predominantly complexes with IL17RC homodimer, whereas IL17A-IL17F favors complexes with IL17RA-IL17RC. IL17RA and IL17RC chains cannot distinguish between IL17A and IL17F molecules, potentially enabling the formation of topologically distinct complexes.

It is found in the secreted. In terms of biological role, effector cytokine of innate and adaptive immune system involved in antimicrobial host defense and maintenance of tissue integrity. IL17A-IL17F signals via IL17RA-IL17RC heterodimeric receptor complex, triggering homotypic interaction of IL17RA and IL17RC chains with TRAF3IP2 adapter through SEFIR domains. This leads to downstream TRAF6-mediated activation of NF-kappa-B and MAPkinase pathways ultimately resulting in transcriptional activation of cytokines, chemokines, antimicrobial peptides and matrix metalloproteinases, with potential strong immune inflammation. IL17A-IL17F is primarily involved in host defense against extracellular bacteria and fungi by inducing neutrophilic inflammation. As signature effector cytokine of T-helper 17 cells (Th17), primarily induces neutrophil activation and recruitment at infection and inflammatory sites. Stimulates the production of antimicrobial beta-defensins DEFB1, DEFB103A, and DEFB104A by mucosal epithelial cells, limiting the entry of microbes through the epithelial barriers. IL17F homodimer can signal via IL17RC homodimeric receptor complex, triggering downstream activation of TRAF6 and NF-kappa-B signaling pathway. Via IL17RC induces transcriptional activation of IL33, a potent cytokine that stimulates group 2 innate lymphoid cells and adaptive T-helper 2 cells involved in pulmonary allergic response to fungi. Likely via IL17RC, promotes sympathetic innervation of peripheral organs by coordinating the communication between gamma-delta T cells and parenchymal cells. Stimulates sympathetic innervation of thermogenic adipose tissue by driving TGFB1 expression. Regulates the composition of intestinal microbiota and immune tolerance by inducing antimicrobial proteins that specifically control the growth of commensal Firmicutes and Bacteroidetes. The sequence is that of Interleukin-17F (Il17f) from Rattus norvegicus (Rat).